The primary structure comprises 333 residues: Ribosomal RNA small subunit methyltransferase H (333 aa).

S-adenosyl-L-methionine is bound by residues 42-44 (GGH), aspartate 62, phenylalanine 86, aspartate 105, and glutamine 112.

The protein belongs to the methyltransferase superfamily. RsmH family.

It localises to the cytoplasm. It catalyses the reaction cytidine(1402) in 16S rRNA + S-adenosyl-L-methionine = N(4)-methylcytidine(1402) in 16S rRNA + S-adenosyl-L-homocysteine + H(+). In terms of biological role, specifically methylates the N4 position of cytidine in position 1402 (C1402) of 16S rRNA. The polypeptide is Ribosomal RNA small subunit methyltransferase H (Cupriavidus necator (strain ATCC 17699 / DSM 428 / KCTC 22496 / NCIMB 10442 / H16 / Stanier 337) (Ralstonia eutropha)).